A 480-amino-acid polypeptide reads, in one-letter code: M-phase inducer phosphatase cdc-25.2 (480 aa).

The span at 1-20 shows a compositional bias: polar residues; it reads MNRPSQISQDVAQPLSNQHE. The disordered stretch occupies residues 1–35; it reads MNRPSQISQDVAQPLSNQHETAMMSSDEDSMSRDS. The 107-residue stretch at 243–349 folds into the Rhodanese domain; sequence FDDKYILIDC…FFFAANEANI (107 aa). The interval 411-452 is disordered; that stretch reads TSAPSTSTENIDTNDDCQKSRTPAVPRIASRRNLFSDPSHSP.

Belongs to the MPI phosphatase family.

The catalysed reaction is O-phospho-L-tyrosyl-[protein] + H2O = L-tyrosyl-[protein] + phosphate. Required for intestinal cell division following the 16E cell stage of embryogenesis. Regulates intestinal cell divisions and binucleations probably by modulating the activity of the cell cycle regulator wee-1.3 and by activating the cdk-1/cyb-1 complex. Plays a role in male tail development, via regulation of the cell divisions of the ray precursor cell lineages, perhaps acting together with cell cycle regulators cyl-1, cdk-1, cyb-3, and cyd-1. This is M-phase inducer phosphatase cdc-25.2 from Caenorhabditis elegans.